We begin with the raw amino-acid sequence, 310 residues long: Ribonuclease Z (310 aa).

His64, His66, Asp68, His69, His146, Asp215, and His273 together coordinate Zn(2+). Asp68 acts as the Proton acceptor in catalysis.

Belongs to the RNase Z family. As to quaternary structure, homodimer. It depends on Zn(2+) as a cofactor.

The catalysed reaction is Endonucleolytic cleavage of RNA, removing extra 3' nucleotides from tRNA precursor, generating 3' termini of tRNAs. A 3'-hydroxy group is left at the tRNA terminus and a 5'-phosphoryl group is left at the trailer molecule.. Its function is as follows. Zinc phosphodiesterase, which displays some tRNA 3'-processing endonuclease activity. Probably involved in tRNA maturation, by removing a 3'-trailer from precursor tRNA. The chain is Ribonuclease Z from Aeropyrum pernix (strain ATCC 700893 / DSM 11879 / JCM 9820 / NBRC 100138 / K1).